We begin with the raw amino-acid sequence, 105 residues long: UPF0251 protein AF_0666 (105 aa).

The protein belongs to the UPF0251 family.

In Archaeoglobus fulgidus (strain ATCC 49558 / DSM 4304 / JCM 9628 / NBRC 100126 / VC-16), this protein is UPF0251 protein AF_0666.